We begin with the raw amino-acid sequence, 435 residues long: Acetyltransferase atnC (435 aa).

3 helical membrane-spanning segments follow: residues 10 to 30 (AFANVALLFAVQILIPAFLII), 40 to 60 (YFGIPCIAFPAYLIFQLAPTL), and 68 to 88 (SFLACEGILVVAHCVNLLLIL). Residue Asn-203 is glycosylated (N-linked (GlcNAc...) asparagine). 3 consecutive transmembrane segments (helical) span residues 306 to 326 (FLVFLLSGILHAVSANIMGLS), 333 to 353 (IPYFSSFALGMMLEDGVQAFY), and 370 to 390 (VVGFIWVVFWMSLTSPWYMFP). Asn-406 carries N-linked (GlcNAc...) asparagine glycosylation. The helical transmembrane segment at 407-427 (LTEVIGMPMMWGLLGTFGMLV) threads the bilayer.

The protein belongs to the wax synthase family.

It localises to the membrane. It participates in secondary metabolite biosynthesis; terpenoid biosynthesis. In terms of biological role, acetyltransferase; part of the gene cluster that mediates the biosynthesis of the meroterpenoids arthripenoids. The pathway begins with the HR-PKS atnH that catalyzes two chain-extension steps to form a reduced triketide, which then primes the SAT domain in the NR-PKS atnG to initiate three more cycles of extension to give a linear hexaketide corresponding to the polyketide part of arthripenoids. The FAD-dependent monooxygenase atnJ then performs an oxidative decarboxylation at C11 of the atnH/atnG product, via an electrophilic aromatic hydroxylation with concomitant ipso-decarboxylation. The membrane-bound polyprenyl transferase atnF then introduces a farnesyl group before the FAD-dependent monooxygenase atnK functions as the first epoxidase on terminal C12'-C13' olefin, followed by a second epoxidation on C7'-C8' catalyzed by atnA. The terpene cyclase/mutase atnI then initiates the sequential tricyclic ring formation through protonation of the terminal epoxide and catalyzes the regioselective and stereoselective 6/6/6-tricyclic ring formation. The cytochrome P450 monooxygenase atnM is responsible for hydroxylating both C1' and C10'. The next steps may involve ketoreduction and acetyl transfer by the ketoreductase atnB and the acetyltransferase atnC, and lead to the production of arthripenoid B, the final biosynthetic product of the atn cluster. The hydroquinone moiety in arthripenoid B is prone to undergo spontaneous oxidation to afford a benzoquinone compound, a key intermediate for generating structure diversity. For instance, addition of a cysteine followed by ring contraction gives arthripenoid A, tautomerization gives the main product arthripenoid C, addition of a molecular of water or amine affords arthripenoid D or E, respectively, and loss of one water forms arthripenoid F. The protein is Acetyltransferase atnC of Arthrinium sp.